A 117-amino-acid chain; its full sequence is Protein Wnt-6 (117 aa).

Ser-1 carries the O-palmitoleoyl serine; by PORCN lipid modification. Cys-83 and Cys-98 are oxidised to a cystine. Asn-84 carries N-linked (GlcNAc...) asparagine glycosylation.

The protein belongs to the Wnt family. Post-translationally, palmitoleoylation is required for efficient binding to frizzled receptors. Depalmitoleoylation leads to Wnt signaling pathway inhibition.

Its subcellular location is the secreted. It localises to the extracellular space. It is found in the extracellular matrix. In terms of biological role, ligand for members of the frizzled family of seven transmembrane receptors. Probable developmental protein. May be a signaling molecule which affects the development of discrete regions of tissues. Is likely to signal over only few cell diameters. This chain is Protein Wnt-6 (WNT-6), found in Evasterias troschelii (Mottled sea star).